A 183-amino-acid chain; its full sequence is Inner membrane-spanning protein YciB (183 aa).

A run of 5 helical transmembrane segments spans residues 19 to 39 (LYGV…QLIV), 53 to 73 (IMGI…DLNF), 76 to 96 (WKVT…QFVF), 121 to 141 (LGWA…SYYF), and 151 to 171 (TFGF…YLYP).

The protein belongs to the YciB family.

It is found in the cell inner membrane. Functionally, plays a role in cell envelope biogenesis, maintenance of cell envelope integrity and membrane homeostasis. The protein is Inner membrane-spanning protein YciB of Actinobacillus pleuropneumoniae serotype 7 (strain AP76).